Consider the following 507-residue polypeptide: MYVSRLLLFLAPLLVKGQLSGSVGPLTSVSSKSQTKTCNVLDYGAVADKSTDIGPALSSAWDECADGGVVYIPPGDYAIETWVKLSGGKACAIQLDGIIYRTGTDGGNMIMIEHTSDFEFFSSTSKGAFQGYGYEFHAKGSSDGPRILRLYDVSDFSVHDVALVDSPLFHFSMDTCSNGEVYNMAIRGGNMGGLDGIDVWSTNVWIHDVEVTNKDECVTVKSPSKNILVENIYCNWSGGCAMGSLGTDTDISDIVYRNVYTWKSNQMYMVKSNGGSGTVSNLVLENFIGHGNAYSLDIDSAWSSMSTIEGDGVELKNVTIRNWKGTEADGSQRGPIKVKCASGAPCTDVTVEDFAMWTESGDEQTYVCENAFGDGFCLADGDGTSTFTTTLTASAAPSGYSAPSMDADLETAFGTDSEIPIPTIPTSFYPGATPYSALAGASVSSSQVPAASSSAEAKFVASPATSSPTATSTAISSVDPVSAATTTATSHGHGKSHHKHQCRAHRH.

A signal peptide spans 1 to 21; that stretch reads MYVSRLLLFLAPLLVKGQLSG. Residues Cys-38 and Cys-64 are joined by a disulfide bond. Asp-215 serves as the catalytic Proton donor. The cysteines at positions 217 and 234 are disulfide-linked. A glycan (N-linked (GlcNAc...) asparagine) is linked at Asn-235. His-290 is an active-site residue. Asn-317 carries N-linked (GlcNAc...) asparagine glycosylation. 2 cysteine pairs are disulfide-bonded: Cys-340–Cys-346 and Cys-368–Cys-377. Low complexity predominate over residues 462-491; the sequence is SPATSSPTATSTAISSVDPVSAATTTATSH. Positions 462–507 are disordered; the sequence is SPATSSPTATSTAISSVDPVSAATTTATSHGHGKSHHKHQCRAHRH. Positions 492–507 are enriched in basic residues; it reads GHGKSHHKHQCRAHRH.

It belongs to the glycosyl hydrolase 28 family.

Its subcellular location is the secreted. It catalyses the reaction Endohydrolysis of alpha-D-GalA-(1-&gt;2)-alpha-L-Rha glycosidic bond in the rhamnogalacturonan I backbone with initial inversion of anomeric configuration releasing oligosaccharides with beta-D-GalA at the reducing end.. In terms of biological role, pectinolytic enzymes consist of four classes of enzymes: pectine lyase, polygalacturonase, pectin methylesterase and rhamnogalacturonase. Hydrolyzes alpha-D-galacturonopyranosyl-(1,2)-alpha-L-rhamnopyranosyl linkages in the backbone of the hairy regions of pectins. Active against linseed rhamnogalacturonan. The chain is Rhamnogalacturonase A (rhgA) from Emericella nidulans (strain FGSC A4 / ATCC 38163 / CBS 112.46 / NRRL 194 / M139) (Aspergillus nidulans).